The chain runs to 359 residues: Hsp70-binding protein 1 (359 aa).

The segment at Met-1–Arg-71 is disordered. The segment covering Ser-23–Gly-37 has biased composition (gly residues). ARM repeat units lie at residues Glu-132 to Gln-174, Ala-177 to Arg-217, Glu-220 to Val-259, and Pro-262 to Thr-301. 2 positions are modified to phosphoserine: Ser-351 and Ser-356.

In terms of assembly, interacts with the ATP-binding domain of HSPA1A. Detected in a ternary complex containing STUB1, HSPA1A and HSPBP1. Interacts with PGLYRP1; this interaction blocks the cytotoxic activity of the PGLYRP1-HSPA1A complex. In terms of tissue distribution, ubiquitous.

Functionally, inhibits HSPA1A chaperone activity by changing the conformation of the ATP-binding domain of HSPA1A and interfering with ATP binding. Interferes with ubiquitination mediated by STUB1 and inhibits chaperone-assisted degradation of immature CFTR. In Homo sapiens (Human), this protein is Hsp70-binding protein 1.